Reading from the N-terminus, the 511-residue chain is Acidic amino acid decarboxylase GADL1 (511 aa).

N6-(pyridoxal phosphate)lysine is present on lysine 323.

Belongs to the group II decarboxylase family. Homodimer. Requires pyridoxal 5'-phosphate as cofactor.

The enzyme catalyses L-aspartate + H(+) = beta-alanine + CO2. It carries out the reaction 3-sulfino-L-alanine + H(+) = hypotaurine + CO2. Functionally, catalyzes the decarboxylation of L-aspartate, 3-sulfino-L-alanine (cysteine sulfinic acid), and L-cysteate to beta-alanine, hypotaurine and taurine, respectively. The preferred substrate is L-aspartate. Does not exhibit any decarboxylation activity toward glutamate. In Xenopus tropicalis (Western clawed frog), this protein is Acidic amino acid decarboxylase GADL1 (gadl1).